The sequence spans 229 residues: Large ribosomal subunit protein uL1 (229 aa).

It belongs to the universal ribosomal protein uL1 family. In terms of assembly, part of the 50S ribosomal subunit.

Its function is as follows. Binds directly to 23S rRNA. The L1 stalk is quite mobile in the ribosome, and is involved in E site tRNA release. Protein L1 is also a translational repressor protein, it controls the translation of the L11 operon by binding to its mRNA. This chain is Large ribosomal subunit protein uL1, found in Actinobacillus succinogenes (strain ATCC 55618 / DSM 22257 / CCUG 43843 / 130Z).